The sequence spans 368 residues: 4-hydroxy-3-methylbut-2-en-1-yl diphosphate synthase (flavodoxin) (368 aa).

Residues Cys-271, Cys-274, Cys-306, and Glu-313 each contribute to the [4Fe-4S] cluster site.

It belongs to the IspG family. The cofactor is [4Fe-4S] cluster.

It catalyses the reaction (2E)-4-hydroxy-3-methylbut-2-enyl diphosphate + oxidized [flavodoxin] + H2O + 2 H(+) = 2-C-methyl-D-erythritol 2,4-cyclic diphosphate + reduced [flavodoxin]. The protein operates within isoprenoid biosynthesis; isopentenyl diphosphate biosynthesis via DXP pathway; isopentenyl diphosphate from 1-deoxy-D-xylulose 5-phosphate: step 5/6. Its function is as follows. Converts 2C-methyl-D-erythritol 2,4-cyclodiphosphate (ME-2,4cPP) into 1-hydroxy-2-methyl-2-(E)-butenyl 4-diphosphate. The sequence is that of 4-hydroxy-3-methylbut-2-en-1-yl diphosphate synthase (flavodoxin) from Mannheimia succiniciproducens (strain KCTC 0769BP / MBEL55E).